A 103-amino-acid polypeptide reads, in one-letter code: Ghrelin (103 aa).

The N-terminal stretch at 1-26 is a signal peptide; that stretch reads MPLRRRASHMFVLLCALSLCVESVKG. The disordered stretch occupies residues 27–51; the sequence is GTSFLSPAQKPQGRRPPRMGRRDVA. A lipid anchor (O-decanoyl serine; alternate) is attached at serine 29. Serine 29 carries the O-hexanoyl serine; alternate lipid modification. A lipid anchor (O-octanoyl serine; alternate) is attached at serine 29. The residue at position 38 (glutamine 38) is a Glutamine amide. The residue at position 45 (methionine 45) is a Methionine amide. Residues 49-103 constitute a propeptide, removed in mature form; sequence DVAEPEIPVIKEDDQFMMSAPFELSVSLSEAEYEKYGPVLQKVLVNLLGDSPLEF.

It belongs to the motilin family. In terms of processing, O-octanoylated by GOAT/MBOAT4. O-octanoylation or O-decanoylation is essential for activity. The O-decanoylated form differs in the length of the carbon backbone of the carboxylic acid forming an ester bond with Ser-29. Expressed in the telencephalon, hypothalamus, pituitary, intestine, liver, spleen and gill, with expression strongest in the intestine.

The protein localises to the secreted. Functionally, ligand for growth hormone secretagogue receptor type 1 (GHSR). Induces the release of growth hormone from the pituitary. Induces adiposity and stimulates gastric acid secretion. Involved in growth regulation. Has an appetite-stimulating effect. The chain is Ghrelin (ghrl) from Carassius auratus (Goldfish).